The following is a 251-amino-acid chain: uncharacterized protein (251 aa).

Residues 1–19 (MRYLKRITIYISLLILVSG) form the signal peptide. C20 carries the N-palmitoyl cysteine lipid modification. A lipid anchor (S-diacylglycerol cysteine) is attached at C20.

The protein belongs to the staphylococcal tandem lipoprotein family.

It is found in the cell membrane. This is an uncharacterized protein from Staphylococcus epidermidis (strain ATCC 12228 / FDA PCI 1200).